Here is a 135-residue protein sequence, read N- to C-terminus: Crossover junction endodeoxyribonuclease Hje (135 aa).

The Mg(2+) site is built by E10, D39, and E52.

This sequence belongs to the Holliday junction resolvase Hjc family. Hje subfamily. In terms of assembly, homodimer. Mg(2+) is required as a cofactor.

It carries out the reaction Endonucleolytic cleavage at a junction such as a reciprocal single-stranded crossover between two homologous DNA duplexes (Holliday junction).. Its function is as follows. A structure-specific endonuclease that resolves Holliday junction (HJ) intermediates during genetic recombination. Acts only on 4-way DNA junctions in a sequence non-specific manner; introduces paired nicks in opposing strands 2 bases 3' of the point of strand exchange only on continuous strands of 4-way junction DNA. Cleaves both mobile and immobile junctions. Plays a more direct role in DNA repair than Hjc. Overexpression of this protein decreases the growth rate, and leads to genomic instability, and global transcriptomic changes. This chain is Crossover junction endodeoxyribonuclease Hje, found in Saccharolobus islandicus (strain REY15A) (Sulfolobus islandicus).